Consider the following 193-residue polypeptide: Segregation and condensation protein B (193 aa).

This sequence belongs to the ScpB family. As to quaternary structure, homodimer. Homodimerization may be required to stabilize the binding of ScpA to the Smc head domains. Component of a cohesin-like complex composed of ScpA, ScpB and the Smc homodimer, in which ScpA and ScpB bind to the head domain of Smc. The presence of the three proteins is required for the association of the complex with DNA.

Its subcellular location is the cytoplasm. Functionally, participates in chromosomal partition during cell division. May act via the formation of a condensin-like complex containing Smc and ScpA that pull DNA away from mid-cell into both cell halves. This chain is Segregation and condensation protein B, found in Shouchella clausii (strain KSM-K16) (Alkalihalobacillus clausii).